The chain runs to 404 residues: Serine/threonine transporter SstT (404 aa).

Helical transmembrane passes span Ile-17–Ile-37, Phe-44–Ile-64, Met-75–Ile-95, Ala-138–Leu-158, Ile-179–Val-199, Leu-212–Leu-232, Ile-287–Leu-307, Phe-319–Val-339, and Phe-354–Ile-374.

It belongs to the dicarboxylate/amino acid:cation symporter (DAACS) (TC 2.A.23) family.

It is found in the cell membrane. It catalyses the reaction L-serine(in) + Na(+)(in) = L-serine(out) + Na(+)(out). The enzyme catalyses L-threonine(in) + Na(+)(in) = L-threonine(out) + Na(+)(out). Functionally, involved in the import of serine and threonine into the cell, with the concomitant import of sodium (symport system). The polypeptide is Serine/threonine transporter SstT (Streptococcus equi subsp. zooepidemicus (strain H70)).